The chain runs to 154 residues: Myoglobin (154 aa).

Positions 2–148 (VLSDAEWQLV…FRKDIAAKYK (147 aa)) constitute a Globin domain. Ser4 carries the phosphoserine modification. Position 65 (His65) interacts with nitrite. His65 is a binding site for O2. Thr68 carries the post-translational modification Phosphothreonine. Heme b is bound at residue His94.

Belongs to the globin family. As to quaternary structure, monomeric.

Its subcellular location is the cytoplasm. It is found in the sarcoplasm. It carries out the reaction Fe(III)-heme b-[protein] + nitric oxide + H2O = Fe(II)-heme b-[protein] + nitrite + 2 H(+). The catalysed reaction is H2O2 + AH2 = A + 2 H2O. In terms of biological role, monomeric heme protein which primary function is to store oxygen and facilitate its diffusion within muscle tissues. Reversibly binds oxygen through a pentacoordinated heme iron and enables its timely and efficient release as needed during periods of heightened demand. Depending on the oxidative conditions of tissues and cells, and in addition to its ability to bind oxygen, it also has a nitrite reductase activity whereby it regulates the production of bioactive nitric oxide. Under stress conditions, like hypoxia and anoxia, it also protects cells against reactive oxygen species thanks to its pseudoperoxidase activity. The sequence is that of Myoglobin (MB) from Eschrichtius robustus (California gray whale).